The following is a 349-amino-acid chain: Transmembrane protein 59-like (349 aa).

The signal sequence occupies residues 1 to 22 (MDSVALMPLLLLLLLQPPPATP). N-linked (GlcNAc...) asparagine glycosylation occurs at N100. A helical transmembrane segment spans residues 276-296 (ILACCLFLSVLVMLWLSCSTL). Positions 347–349 (TKL) match the Microbody targeting signal motif.

It belongs to the TMEM59 family.

It localises to the golgi apparatus membrane. Modulates the O-glycosylation and complex N-glycosylation steps occurring during the Golgi maturation of APP. Inhibits APP transport to the cell surface and further shedding. The protein is Transmembrane protein 59-like (TMEM59L) of Bos taurus (Bovine).